The sequence spans 277 residues: Small ribosomal subunit protein uS2 (277 aa).

2 stretches are compositionally biased toward basic and acidic residues: residues 227 to 256 (QARA…RTEA) and 267 to 277 (SEAKAEGNTEA). Positions 227 to 277 (QARAERQEAAAKEAAGDADKAPAEAERTEAPAEEAPAEAQSEAKAEGNTEA) are disordered.

It belongs to the universal ribosomal protein uS2 family.

This is Small ribosomal subunit protein uS2 from Corynebacterium jeikeium (strain K411).